Reading from the N-terminus, the 277-residue chain is Shikimate dehydrogenase (NADP(+)) (277 aa).

Residues 17 to 19 and Thr64 each bind shikimate; that span reads SRS. Residue Lys68 is the Proton acceptor of the active site. Shikimate is bound by residues Asn88 and Asp103. NADP(+) contacts are provided by residues 128-132, 152-157, and Leu217; these read GAGGS and NRTLDR. Tyr219 contributes to the shikimate binding site. Residue Gly240 coordinates NADP(+).

The protein belongs to the shikimate dehydrogenase family. In terms of assembly, homodimer.

The enzyme catalyses shikimate + NADP(+) = 3-dehydroshikimate + NADPH + H(+). It functions in the pathway metabolic intermediate biosynthesis; chorismate biosynthesis; chorismate from D-erythrose 4-phosphate and phosphoenolpyruvate: step 4/7. In terms of biological role, involved in the biosynthesis of the chorismate, which leads to the biosynthesis of aromatic amino acids. Catalyzes the reversible NADPH linked reduction of 3-dehydroshikimate (DHSA) to yield shikimate (SA). The chain is Shikimate dehydrogenase (NADP(+)) from Rhodopseudomonas palustris (strain BisB18).